Consider the following 102-residue polypeptide: DET1- and DDB1-associated protein 1 (102 aa).

Position 2 is an N-acetylalanine (Ala-2). Phosphoserine occurs at positions 33 and 95. The tract at residues 67-102 is disordered; that stretch reads NAAKKRDQEQVEAEGESSAPPRKVARTDSPDMPEDT.

This sequence belongs to the DDA1 family. In terms of assembly, component of numerous DCX (DDB1-CUL4-X-box) E3 ubiquitin-protein ligase complexes which consist of a core of DDB1, cullin-4 (CUL4A or CUL4B), DDA1 and RBX1. Component of the DCX(DCAF15) complex, also named CLR4(DCAF15) complex, composed of DCAF15, DDB1, cullin-4 (CUL4A or CUL4B), DDA1 and RBX1. Part of the DDD core complex containing DET1, DDA1 and DDB1; the DDD core complex recruits a specific UBE2E enzyme, such as UBE2E1, UBE2E2 UBE2E3, to form specific DDD-E2 complexes.

It participates in protein modification; protein ubiquitination. In terms of biological role, functions as a component of numerous distinct DCX (DDB1-CUL4-X-box) E3 ubiquitin-protein ligase complexes which mediate the ubiquitination and subsequent proteasomal degradation of target proteins. In the DCX complexes, acts as a scaffolding subunit required to stabilize the complex. This is DET1- and DDB1-associated protein 1 from Mus musculus (Mouse).